Here is a 223-residue protein sequence, read N- to C-terminus: Deoxyribose-phosphate aldolase (223 aa).

Aspartate 91 (proton donor/acceptor) is an active-site residue. The Schiff-base intermediate with acetaldehyde role is filled by lysine 154. Lysine 183 serves as the catalytic Proton donor/acceptor.

The protein belongs to the DeoC/FbaB aldolase family. DeoC type 1 subfamily.

The protein localises to the cytoplasm. The enzyme catalyses 2-deoxy-D-ribose 5-phosphate = D-glyceraldehyde 3-phosphate + acetaldehyde. It participates in carbohydrate degradation; 2-deoxy-D-ribose 1-phosphate degradation; D-glyceraldehyde 3-phosphate and acetaldehyde from 2-deoxy-alpha-D-ribose 1-phosphate: step 2/2. In terms of biological role, catalyzes a reversible aldol reaction between acetaldehyde and D-glyceraldehyde 3-phosphate to generate 2-deoxy-D-ribose 5-phosphate. This Geobacillus kaustophilus (strain HTA426) protein is Deoxyribose-phosphate aldolase.